We begin with the raw amino-acid sequence, 132 residues long: Small ribosomal subunit protein uS9 (132 aa).

It belongs to the universal ribosomal protein uS9 family.

This is Small ribosomal subunit protein uS9 from Baumannia cicadellinicola subsp. Homalodisca coagulata.